We begin with the raw amino-acid sequence, 140 residues long: NADPH-dependent 7-cyano-7-deazaguanine reductase (140 aa).

Cys-51 serves as the catalytic Thioimide intermediate. Asp-58 functions as the Proton donor in the catalytic mechanism. Substrate is bound by residues 73–75 (LES) and 92–93 (HE).

It belongs to the GTP cyclohydrolase I family. QueF type 1 subfamily.

The protein resides in the cytoplasm. The catalysed reaction is 7-aminomethyl-7-carbaguanine + 2 NADP(+) = 7-cyano-7-deazaguanine + 2 NADPH + 3 H(+). It participates in tRNA modification; tRNA-queuosine biosynthesis. Functionally, catalyzes the NADPH-dependent reduction of 7-cyano-7-deazaguanine (preQ0) to 7-aminomethyl-7-deazaguanine (preQ1). The sequence is that of NADPH-dependent 7-cyano-7-deazaguanine reductase from Syntrophus aciditrophicus (strain SB).